Reading from the N-terminus, the 230-residue chain is uncharacterized protein (230 aa).

This is an uncharacterized protein from Dictyostelium discoideum (Social amoeba).